We begin with the raw amino-acid sequence, 446 residues long: Sensor-type histidine kinase PrrB (446 aa).

A run of 2 helical transmembrane segments spans residues 19–39 (VVATAIGAAIPVLIVGTVVWV) and 151–171 (LLICTFAIGAAAVFAWLLAAF). Residues 172–222 (AVRPFKQLAEQTRSIDAGDEAPRVEVHGASEAIEIAEAMRGMLQRIWNEQN) enclose the HAMP domain. In terms of domain architecture, Histidine kinase spans 237–446 (VSSHELRTPL…RLVLRLPGPS (210 aa)). H240 bears the Phosphohistidine; by autocatalysis mark.

In terms of processing, autophosphorylated.

It is found in the cell membrane. The catalysed reaction is ATP + protein L-histidine = ADP + protein N-phospho-L-histidine.. Its function is as follows. Member of the two-component regulatory system PrrB/PrrA that is involved specifically in early intracellular multiplication of Mycobacterium and is essential for its viability. Functions as a sensor protein kinase which is autophosphorylated at a histidine residue and transfers its phosphate group to the conserved aspartic acid residue in the regulatory domain of PrrA. In turn, PrrA binds to the upstream promoter regions of target genes including itself to positively regulate their expression. The protein is Sensor-type histidine kinase PrrB (prrB) of Mycobacterium bovis (strain ATCC BAA-935 / AF2122/97).